Reading from the N-terminus, the 205-residue chain is GTP cyclohydrolase-2 (205 aa).

49–53 (RLHSE) lines the GTP pocket. Zn(2+)-binding residues include Cys54, Cys65, and Cys67. Residues Gln70, 92-94 (EGR), and Thr114 contribute to the GTP site. Asp126 serves as the catalytic Proton acceptor. The Nucleophile role is filled by Arg128. Residues Thr149 and Lys154 each coordinate GTP.

This sequence belongs to the GTP cyclohydrolase II family. Zn(2+) serves as cofactor.

It carries out the reaction GTP + 4 H2O = 2,5-diamino-6-hydroxy-4-(5-phosphoribosylamino)-pyrimidine + formate + 2 phosphate + 3 H(+). Its pathway is cofactor biosynthesis; riboflavin biosynthesis; 5-amino-6-(D-ribitylamino)uracil from GTP: step 1/4. In terms of biological role, catalyzes the conversion of GTP to 2,5-diamino-6-ribosylamino-4(3H)-pyrimidinone 5'-phosphate (DARP), formate and pyrophosphate. This is GTP cyclohydrolase-2 from Pseudomonas entomophila (strain L48).